Reading from the N-terminus, the 201-residue chain is Probable quinol oxidase subunit 3 (201 aa).

Transmembrane regions (helical) follow at residues 20–40 (LGFW…FATL), 62–82 (LVLI…ISIY), 91–111 (LMMF…GFEI), 133–153 (FFIL…WIIC), and 172–192 (FIVS…FTAV).

This sequence belongs to the cytochrome c oxidase subunit 3 family.

The protein localises to the cell membrane. The enzyme catalyses 2 a quinol + O2 = 2 a quinone + 2 H2O. Catalyzes quinol oxidation with the concomitant reduction of oxygen to water. This Staphylococcus haemolyticus (strain JCSC1435) protein is Probable quinol oxidase subunit 3 (qoxC).